A 319-amino-acid chain; its full sequence is Protease HtpX homolog (319 aa).

The next 2 membrane-spanning stretches (helical) occupy residues 6 to 26 and 28 to 48; these read TAMLLAFMTALFMAVGYVIGG and GGMMIALLMAAGMNFFSYWNS. Histidine 130 contacts Zn(2+). The active site involves glutamate 131. Zn(2+) is bound at residue histidine 134. The next 2 membrane-spanning stretches (helical) occupy residues 145–165 and 172–192; these read LTATLAGAISMLGNFAFFFGG and PLGFVGVLIAMIVAPFAAMLV. Glutamate 201 serves as a coordination point for Zn(2+). The segment at 279 to 319 is disordered; that stretch reads REMSAGSTAPARPDNAVRRSRSVPKTGWGRGGSEPPKGPWS.

This sequence belongs to the peptidase M48B family. Requires Zn(2+) as cofactor.

The protein localises to the cell inner membrane. The protein is Protease HtpX homolog of Sinorhizobium fredii (strain NBRC 101917 / NGR234).